The following is a 305-amino-acid chain: Cytochrome c biogenesis protein CcsA (305 aa).

8 helical membrane passes run Ile-13 to Val-33, Lys-42 to Ser-62, Leu-70 to Ile-90, Trp-97 to Leu-117, Trp-135 to Leu-155, Tyr-212 to Ala-232, Trp-242 to Ile-262, and Val-276 to Ile-296.

It belongs to the CcmF/CycK/Ccl1/NrfE/CcsA family. In terms of assembly, may interact with Ccs1.

The protein localises to the plastid. It localises to the chloroplast thylakoid membrane. In terms of biological role, required during biogenesis of c-type cytochromes (cytochrome c6 and cytochrome f) at the step of heme attachment. In Welwitschia mirabilis (Tree tumbo), this protein is Cytochrome c biogenesis protein CcsA.